Here is a 447-residue protein sequence, read N- to C-terminus: GTPase Der (447 aa).

2 EngA-type G domains span residues 3 to 167 (PVVA…HLED) and 180 to 353 (IKLA…KAAN). GTP-binding positions include 9–16 (GRPNVGKS), 56–60 (DTGGF), 119–122 (NKAE), 186–193 (GRPNVGKS), 233–237 (DTAGL), and 298–301 (NKWD). The region spanning 354-438 (CKMSTPILTR…PMRIEFKSST (85 aa)) is the KH-like domain.

This sequence belongs to the TRAFAC class TrmE-Era-EngA-EngB-Septin-like GTPase superfamily. EngA (Der) GTPase family. Associates with the 50S ribosomal subunit.

Its function is as follows. GTPase that plays an essential role in the late steps of ribosome biogenesis. The sequence is that of GTPase Der from Albidiferax ferrireducens (strain ATCC BAA-621 / DSM 15236 / T118) (Rhodoferax ferrireducens).